Consider the following 377-residue polypeptide: Nitric oxide reductase FlRd-NAD(+) reductase (377 aa).

Belongs to the FAD-dependent oxidoreductase family. Requires FAD as cofactor.

The protein localises to the cytoplasm. The enzyme catalyses 2 reduced [nitric oxide reductase rubredoxin domain] + NAD(+) + H(+) = 2 oxidized [nitric oxide reductase rubredoxin domain] + NADH. The protein operates within nitrogen metabolism; nitric oxide reduction. In terms of biological role, one of at least two accessory proteins for anaerobic nitric oxide (NO) reductase. Reduces the rubredoxin moiety of NO reductase. This chain is Nitric oxide reductase FlRd-NAD(+) reductase, found in Escherichia coli (strain 55989 / EAEC).